The sequence spans 1059 residues: Protein cappuccino (1059 aa).

Polar residues-rich tracts occupy residues 62-80 and 90-123; these read AAVT…NESG and ATTS…SAAS. Disordered stretches follow at residues 62-146 and 448-647; these read AAVT…GTPT and QTES…TAPP. Residues 133–142 show a composition bias toward pro residues; that stretch reads LPLPPPPPGF. Residues 468 to 481 are compositionally biased toward basic and acidic residues; sequence SDNESAKEDGEKPH. The region spanning 480–560 is the FH1 domain; it reads PHAVAPPPPP…PPPPMSASPS (81 aa). The span at 483–541 shows a compositional bias: pro residues; that stretch reads VAPPPPPPPPPLHAFVAPPPPPPPPPPPPPPLANYGAPPPPPPPPPGSGSAPPPPPPAP. An FH2 domain is found at 585 to 1032; that stretch reads RKSAVNPPKP…KKSKQAQIES (448 aa). Residues 620–629 show a composition bias toward polar residues; that stretch reads TDSTENSGSS. Residues 1049-1059 form an important for interaction with spir region; it reads KERMLMRRSKN.

This sequence belongs to the formin homology family. Cappuccino subfamily. As to quaternary structure, interacts with wash. Interacts with spir.

It localises to the cytoplasm. Its subcellular location is the cytoskeleton. The protein resides in the cytosol. The protein localises to the membrane. It is found in the cytoplasmic vesicle membrane. Functionally, acts as an actin nucleation factor and promotes assembly of actin filaments together with spir. May play a role in intracellular vesicle transport along actin fibers, providing a novel link between actin cytoskeleton dynamics and intracellular transport. The chain is Protein cappuccino (capu) from Drosophila melanogaster (Fruit fly).